The following is a 127-amino-acid chain: Succinate dehydrogenase cytochrome b560 subunit (127 aa).

2 consecutive transmembrane segments (helical) span residues 36 to 53 and 60 to 83; these read VGLA…RIIL and NLLT…FILL. Position 88 (H88) interacts with heme. The helical transmembrane segment at 109-126 threads the bilayer; it reads LSKFSLFLLVSLSLILIF.

The protein belongs to the cytochrome b560 family. Forms part of complex II containing four subunits: a 70 kDa flavoprotein (FP), a 27 kDa iron-sulfur protein (IP), a cytochrome B and a membrane-anchoring protein. The cofactor is heme.

Its subcellular location is the mitochondrion inner membrane. It functions in the pathway carbohydrate metabolism; tricarboxylic acid cycle. Membrane-anchoring subunit of succinate dehydrogenase (SDH) that is involved in complex II of the mitochondrial electron transport chain and is responsible for transferring electrons from succinate to ubiquinone (coenzyme Q). This Chondrus crispus (Carrageen Irish moss) protein is Succinate dehydrogenase cytochrome b560 subunit (SDH3).